A 279-amino-acid chain; its full sequence is Acetyl-coenzyme A carboxylase carboxyl transferase subunit beta (279 aa).

One can recognise a CoA carboxyltransferase N-terminal domain in the interval 23–279 (LWWKCEECGA…IVRLAGMLKV (257 aa)). Zn(2+)-binding residues include C27, C30, C46, and C49. Residues 27–49 (CEECGAMIHKKQLEDHVYTCSDC) form a C4-type zinc finger.

Belongs to the AccD/PCCB family. As to quaternary structure, acetyl-CoA carboxylase is a heterohexamer composed of biotin carboxyl carrier protein (AccB), biotin carboxylase (AccC) and two subunits each of ACCase subunit alpha (AccA) and ACCase subunit beta (AccD). Zn(2+) is required as a cofactor.

Its subcellular location is the cytoplasm. The catalysed reaction is N(6)-carboxybiotinyl-L-lysyl-[protein] + acetyl-CoA = N(6)-biotinyl-L-lysyl-[protein] + malonyl-CoA. Its pathway is lipid metabolism; malonyl-CoA biosynthesis; malonyl-CoA from acetyl-CoA: step 1/1. Component of the acetyl coenzyme A carboxylase (ACC) complex. Biotin carboxylase (BC) catalyzes the carboxylation of biotin on its carrier protein (BCCP) and then the CO(2) group is transferred by the transcarboxylase to acetyl-CoA to form malonyl-CoA. The polypeptide is Acetyl-coenzyme A carboxylase carboxyl transferase subunit beta (Chlorobium limicola (strain DSM 245 / NBRC 103803 / 6330)).